Consider the following 189-residue polypeptide: Protein Rex (189 aa).

The span at 1 to 16 shows a compositional bias: basic residues; the sequence is MPKTRRGPRRSQRKRP. Residues 1-26 are disordered; the sequence is MPKTRRGPRRSQRKRPPTPWPTSQGL. Residues 2–18 carry the Nuclear localization signal, and RNA-binding (RxRE) motif; it reads PKTRRGPRRSQRKRPPT. The segment at 56-70 is homomultimerization; the sequence is RPAYIVTPYWPPVQS. A Phosphoserine; by host modification is found at S70. The Nuclear export signal signature appears at 82–93; it reads LSAQLYSSLSLG. The segment at 87 to 189 is disordered; that stretch reads YSSLSLGSPP…PPSPGPSCPR (103 aa). Over residues 115-125 the composition is skewed to pro residues; that stretch reads IQPPTFHPPSS. Positions 123–131 are homomultimerization; it reads PSSRPYANT. Phosphothreonine; by host is present on T174. S177 is modified (phosphoserine; by host). Residues 178–189 show a composition bias toward pro residues; the sequence is FPPPSPGPSCPR.

Belongs to the deltaretrovirus Rex protein family. In terms of assembly, homomultimer. Multimeric assembly is essential for activity and involves XPO1. Binds to human XPO1 and KPNB1. Interacts (via N-terminal nuclear localization signal) with human NPM1. Phosphorylated.

It localises to the host nucleus. The protein localises to the host nucleolus. It is found in the host cytoplasm. Its function is as follows. Rex escorts unspliced gag-pro-pol and singly spliced env mRNAs out of the nucleus of infected cells. These mRNAs carry a recognition sequence called Rex responsive element (RxRE or XRE) located at the 3' region of the long terminal repeat (LTR). This function is essential since most HTLV proteins are translated from unspliced or partially spliced pre-mRNAs that cannot exit the nucleus by the pathway used by fully processed cellular mRNAs. Rex itself is translated from a fully spliced mRNA that probably readily exits the nucleus. Rex's nuclear localization signal (NLS) binds directly to KPNB1/importin beta-1 without previous binding to KPNA1/importin alpha-1. KPNB1 binds to the GDP bound form of RAN (Ran-GDP) and targets Rex to the nucleus. In the nucleus, the conversion from Ran-GDP to Ran-GTP dissociates Rex from KPNB1 and allows Rex's binding to the RRE in viral pre-mRNAs. Rex multimerizes on the RRE via cooperative assembly. This multimerization is critical for its full biological activity, since it may shield the viral RNA from being spliced or down-regulated, and probably exposes Rex's nuclear export signal (NES) to the surface. Rex can then form a complex with XPO1/CRM1, RANBP3 and Ran-GTP, leading to nuclear export of the complex. Conversion from Ran-GTP to Ran-GDP mediates dissociation of the Rex/RRE/XPO1/RANBP3/RAN complex, so that Rex can return to the nucleus for a subsequent round of export. The chain is Protein Rex from Homo sapiens (Human).